We begin with the raw amino-acid sequence, 72 residues long: Large ribosomal subunit protein bL28 (72 aa).

Belongs to the bacterial ribosomal protein bL28 family.

The polypeptide is Large ribosomal subunit protein bL28 (Chlorobium chlorochromatii (strain CaD3)).